Reading from the N-terminus, the 702-residue chain is MKKVRFIFLALLFFLASPEGAMASDGTWQGKQYLKEDGSQAANEWVFDTHYQSWFYIKADANYAENEWLKQGDDYFYLKSGGYMAKSEWVEDKGAFYYLDQDGKMKRNAWVGTSYVGATGAKVIEDWVYDSQYDAWFYIKADGQHAEKEWLQIKGKDYYFKSGGYLLTSQWINQAYVNASGAKVQQGWLFDKQYQSWFYIKENGNYADKEWIFENGHYYYLKSGGYMAANEWIWDKESWFYLKFDGKIAEKEWVYDSHSQAWYYFKSGGYMAANEWIWDKESWFYLKFDGKMAEKEWVYDSHSQAWYYFKSGGYMTANEWIWDKESWFYLKSDGKIAEKEWVYDSHSQAWYYFKSGGYMTANEWIWDKESWFYLKSDGKMAEKEWVYDSHSQAWYYFKSGGYMAKNETVDGYQLGSDGKWLGGKATNKNAAYYQVVPVTANVYDSDGEKLSYISQGSVVWLDKDRKSDDKRLAITISGLSGYMKTEDLQALDASKDFIPYYESDGHRFYHYVAQNASIPVASHLSDMEVGKKYYSADGLHFDGFKLENPFLFKDLTEATNYSAEELDKVFSLLNINNSLLENKGATFKEAEEHYHINALYLLAHSALESNWGRSKIAKDKNNFFGITAYDTTPYLSAKTFDDVDKGILGATKWIKENYIDRGRTFLGNKASGMNVEYASDPYWGEKIASVMMKINEKLGGKD.

A signal peptide spans 1 to 23 (MKKVRFIFLALLFFLASPEGAMA). Cell wall-binding repeat units follow at residues 42–63 (ANEWVFDTHYQSWFYIKADANY), 65–84 (ENEWLKQGDDYFYLKSGGYM), 86–105 (KSEWVEDKGAFYYLDQDGKM), 124–145 (IEDWVYDSQYDAWFYIKADGQH), 147–166 (EKEWLQIKGKDYYFKSGGYL), 185–206 (QQGWLFDKQYQSWFYIKENGNY), 208–227 (DKEWIFENGHYYYLKSGGYM), 229–248 (ANEWIWDKESWFYLKFDGKI), 250–271 (EKEWVYDSHSQAWYYFKSGGYM), 273–292 (ANEWIWDKESWFYLKFDGKM), 294–315 (EKEWVYDSHSQAWYYFKSGGYM), 317–336 (ANEWIWDKESWFYLKSDGKI), 338–359 (EKEWVYDSHSQAWYYFKSGGYM), 361–380 (ANEWIWDKESWFYLKSDGKM), and 382–403 (EKEWVYDSHSQAWYYFKSGGYM).

Belongs to the glycosyl hydrolase 73 family.

It localises to the secreted. It catalyses the reaction an N(4)-(oligosaccharide-(1-&gt;3)-[oligosaccharide-(1-&gt;6)]-beta-D-Man-(1-&gt;4)-beta-D-GlcNAc-(1-&gt;4)-alpha-D-GlcNAc)-L-asparaginyl-[protein] + H2O = an oligosaccharide-(1-&gt;3)-[oligosaccharide-(1-&gt;6)]-beta-D-Man-(1-&gt;4)-D-GlcNAc + N(4)-(N-acetyl-beta-D-glucosaminyl)-L-asparaginyl-[protein]. Functionally, plays an important role in cell wall degradation and cell separation. This chain is Putative endo-beta-N-acetylglucosaminidase (lytB), found in Streptococcus pneumoniae (strain ATCC BAA-255 / R6).